Reading from the N-terminus, the 461-residue chain is FAD-dependent monooxygenase nodY2 (461 aa).

Positions 48 and 136 each coordinate FAD. Arg214 is a catalytic residue. Residues Asp338 and Gly351 each coordinate FAD.

Belongs to the paxM FAD-dependent monooxygenase family. FAD serves as cofactor.

The protein operates within secondary metabolite biosynthesis. Its function is as follows. FAD-dependent monooxygenase; part of the gene cluster that mediates the biosynthesis of the indole diterpenes nodulisporic acids (NA). Nodulisporic acid A (NAA) and its chemically modified derivatives are of particular significance because of their highly potent insecticidal activity against blood-feeding arthropods and lack of observable adverse effects on mammals, in particular the tremogenicity associated with the paspaline-derived IDTs is not observed. The geranylgeranyl diphosphate (GGPP) synthase ggs1, localized outside of the cluster, is proposed to catalyze the first step in nodulisporic acid biosynthesis via conversion of farnesyl pyrophosphate and isopentyl pyrophosphate into geranylgeranyl pyrophosphate (GGPP). Condensation of indole-3-glycerol phosphate with GGPP by the prenyl transferase nodC then forms 3-geranylgeranylindole (3-GGI). Epoxidation by the FAD-dependent monooxygenase nodM leads to a single-epoxidized-GGI that is substrate of the terpene cyclase nodB for cyclization to yield emindole SB. The terminal methyl carbon, C28, of emindole SB is then oxidized by the cytochrome P450 monooxygenase nodW to produce nodulisporic acid F (NAF), the pentacyclic core of NAA. NAF is converted to nodulisporic acid E (NAE) via prenylation. This step is probably performed by one of the indole diterpene prenyltransferases nodD1 or nodD2. Several oxidation steps performed by the FAD-linked oxidoreductase nodO and one of the cytochrome P450 monooxygenase nodR, nodX or nodZ further convert NAE to nodulisporic acid D (NAD). NAD is substrate of cytochrome P450 monooxygenase nodJ to produce the precursor of nodulisporic acid C (NAC), converted to NAC by one of the indole diterpene prenyltransferases nodD1 or nodD2. The FAD-dependent monooxygenase nodY2 then oxidizes NAC to nodulisporic acid B (NAB). Finally NAB is converted to NAA by one of the cytochrome P450 monooxygenases nodR, nodX or nodZ. The sequence is that of FAD-dependent monooxygenase nodY2 from Hypoxylon pulicicidum.